The following is a 206-amino-acid chain: Transmembrane 4 L6 family member 19 (206 aa).

At 1-16 (MLSFSRVVNCSRTCSR) the chain is on the cytoplasmic side. The chain crosses the membrane as a helical span at residues 17-37 (FLGLSLGTASLCAAGANIALL). Over 38-54 (FPNWDVTYLMRGLIGKH) the chain is Extracellular. The helical transmembrane segment at 55-75 (AMLGSGLWGGGLMVLLAATLI) threads the bilayer. Over 76 to 89 (SMTGSFSKSAPCLQ) the chain is Cytoplasmic. Residues 90–110 (VLIALLSSGLALLGAVICFVT) form a helical membrane-spanning segment. The Extracellular segment spans residues 111-171 (SGVALKDGPF…PSKAVVWHVA (61 aa)). Asn-129 carries an N-linked (GlcNAc...) asparagine glycan. The chain crosses the membrane as a helical span at residues 172 to 192 (FFSILLCISLLQLLLVAIHLV). Positions 182 to 192 (LQLLLVAIHLV) are important for homodimerization. At 193-206 (NSILGLFCSFCEKH) the chain is on the cytoplasmic side.

This sequence belongs to the L6 tetraspanin family. In terms of assembly, may form homodimers and homooligomers. Interacts with integrins ITGAV and ITGB3. Interacts with components of members of the V0 complex of vacuolar(H+)-ATPase (V-ATPase), including ATP6V0B and ATP6V0D2; this interaction inhibits V1-V0 complex assembly. In terms of tissue distribution, predominantly expressed in osteoclasts (at protein level). Also expressed in white adipose tissue, as well as in bone marrow-derived macrophages.

The protein resides in the lysosome membrane. The protein localises to the cytoplasm. It localises to the cytoskeleton. Its subcellular location is the cell projection. It is found in the filopodium. In terms of biological role, negatively regulates vacuolar (H+)-ATPase (V-ATPase) activity by interacting with members of V-ATPase V0 complex and hence inhibiting V1-V0 assembly. Required for multinucleation during osteoclast differentiation. The sequence is that of Transmembrane 4 L6 family member 19 (Tm4sf19) from Mus musculus (Mouse).